Here is a 436-residue protein sequence, read N- to C-terminus: Enolase (436 aa).

Residue glutamine 167 coordinates (2R)-2-phosphoglycerate. Glutamate 209 functions as the Proton donor in the catalytic mechanism. Mg(2+)-binding residues include aspartate 246, glutamate 291, and aspartate 318. (2R)-2-phosphoglycerate contacts are provided by lysine 343, arginine 372, serine 373, and lysine 394. The active-site Proton acceptor is lysine 343.

The protein belongs to the enolase family. In terms of assembly, component of the RNA degradosome, a multiprotein complex involved in RNA processing and mRNA degradation. It depends on Mg(2+) as a cofactor.

Its subcellular location is the cytoplasm. It localises to the secreted. The protein localises to the cell surface. It carries out the reaction (2R)-2-phosphoglycerate = phosphoenolpyruvate + H2O. The protein operates within carbohydrate degradation; glycolysis; pyruvate from D-glyceraldehyde 3-phosphate: step 4/5. Functionally, catalyzes the reversible conversion of 2-phosphoglycerate (2-PG) into phosphoenolpyruvate (PEP). It is essential for the degradation of carbohydrates via glycolysis. The chain is Enolase from Haemophilus influenzae (strain 86-028NP).